The chain runs to 341 residues: Methionine import ATP-binding protein MetN 3 (341 aa).

One can recognise an ABC transporter domain in the interval 2 to 241 (ILLENVKKIY…PQQDITKRFV (240 aa)). 38-45 (GYSGAGKS) contributes to the ATP binding site.

Belongs to the ABC transporter superfamily. Methionine importer (TC 3.A.1.24) family. The complex is composed of two ATP-binding proteins (MetN), two transmembrane proteins (MetI) and a solute-binding protein (MetQ).

It localises to the cell membrane. The catalysed reaction is L-methionine(out) + ATP + H2O = L-methionine(in) + ADP + phosphate + H(+). The enzyme catalyses D-methionine(out) + ATP + H2O = D-methionine(in) + ADP + phosphate + H(+). Part of the ABC transporter complex MetNIQ involved in methionine import. Responsible for energy coupling to the transport system. This Bacillus anthracis protein is Methionine import ATP-binding protein MetN 3.